Here is a 436-residue protein sequence, read N- to C-terminus: GTPase Der (436 aa).

2 EngA-type G domains span residues 4-167 and 175-351; these read PTVA…PTEV and IRFS…ESQN. Residues 10-17, 57-61, 119-122, 181-188, 229-233, and 294-297 each bind GTP; these read GRPNVGKS, DTGGI, NKVD, DTAGM, and NKWD. Residues 352 to 436 enclose the KH-like domain; the sequence is RRISSAVLND…PIHLIARKRK (85 aa).

This sequence belongs to the TRAFAC class TrmE-Era-EngA-EngB-Septin-like GTPase superfamily. EngA (Der) GTPase family. Associates with the 50S ribosomal subunit.

GTPase that plays an essential role in the late steps of ribosome biogenesis. This Streptococcus thermophilus (strain CNRZ 1066) protein is GTPase Der.